The sequence spans 405 residues: Serpin I2 (405 aa).

The N-terminal stretch at Met-1–Thr-18 is a signal peptide. N-linked (GlcNAc...) asparagine glycosylation occurs at Asn-306.

Belongs to the serpin family. Expressed in pancreas.

Its subcellular location is the secreted. This chain is Serpin I2 (Serpini2), found in Mus musculus (Mouse).